A 313-amino-acid chain; its full sequence is Protoheme IX farnesyltransferase (313 aa).

Helical transmembrane passes span 23-43 (ILAY…VTTI), 56-76 (PLLI…ANTL), 107-127 (LIFG…TANL), 128-148 (LSGL…TLVL), 155-175 (NVVW…SAVT), 182-202 (ALVM…ALAM), 243-263 (LALA…VWFL), and 291-311 (YLAV…PTLF).

Belongs to the UbiA prenyltransferase family. Protoheme IX farnesyltransferase subfamily.

It localises to the cell membrane. The enzyme catalyses heme b + (2E,6E)-farnesyl diphosphate + H2O = Fe(II)-heme o + diphosphate. It participates in porphyrin-containing compound metabolism; heme O biosynthesis; heme O from protoheme: step 1/1. Converts heme B (protoheme IX) to heme O by substitution of the vinyl group on carbon 2 of heme B porphyrin ring with a hydroxyethyl farnesyl side group. The chain is Protoheme IX farnesyltransferase from Mycobacteroides abscessus (strain ATCC 19977 / DSM 44196 / CCUG 20993 / CIP 104536 / JCM 13569 / NCTC 13031 / TMC 1543 / L948) (Mycobacterium abscessus).